Consider the following 251-residue polypeptide: 3-dehydroquinate dehydratase (251 aa).

3-dehydroquinate contacts are provided by residues 47–49 (EWR) and Arg83. His144 serves as the catalytic Proton donor/acceptor. The Schiff-base intermediate with substrate role is filled by Lys171. Residues Arg214, Ser233, and Gln237 each coordinate 3-dehydroquinate.

Belongs to the type-I 3-dehydroquinase family. In terms of assembly, homodimer.

The enzyme catalyses 3-dehydroquinate = 3-dehydroshikimate + H2O. It functions in the pathway metabolic intermediate biosynthesis; chorismate biosynthesis; chorismate from D-erythrose 4-phosphate and phosphoenolpyruvate: step 3/7. Its function is as follows. Involved in the third step of the chorismate pathway, which leads to the biosynthesis of aromatic amino acids. Catalyzes the cis-dehydration of 3-dehydroquinate (DHQ) and introduces the first double bond of the aromatic ring to yield 3-dehydroshikimate. The sequence is that of 3-dehydroquinate dehydratase from Klebsiella pneumoniae (strain 342).